The primary structure comprises 297 residues: Molybdate/tungstate import ATP-binding protein WtpC (297 aa).

The region spanning 2-226 (LKVNNLSKIW…PKNKKVAEFL (225 aa)) is the ABC transporter domain. 32 to 39 (GPSGAGKS) is a binding site for ATP.

This sequence belongs to the ABC transporter superfamily. Sulfate/tungstate importer (TC 3.A.1.6) family. In terms of assembly, the complex is composed of two ATP-binding proteins (WtpC), two transmembrane proteins (WtpB) and a solute-binding protein (WtpA).

The protein localises to the cell membrane. It carries out the reaction tungstate(in) + ATP + H2O = tungstate(out) + ADP + phosphate + H(+). Part of the ABC transporter complex WtpABC involved in molybdate/tungstate import. Responsible for energy coupling to the transport system. The sequence is that of Molybdate/tungstate import ATP-binding protein WtpC (wtpC) from Methanocaldococcus jannaschii (strain ATCC 43067 / DSM 2661 / JAL-1 / JCM 10045 / NBRC 100440) (Methanococcus jannaschii).